Reading from the N-terminus, the 514-residue chain is Proline--tRNA ligase (514 aa).

The protein belongs to the class-II aminoacyl-tRNA synthetase family. ProS type 3 subfamily. As to quaternary structure, homodimer.

It localises to the cytoplasm. The enzyme catalyses tRNA(Pro) + L-proline + ATP = L-prolyl-tRNA(Pro) + AMP + diphosphate. Functionally, catalyzes the attachment of proline to tRNA(Pro) in a two-step reaction: proline is first activated by ATP to form Pro-AMP and then transferred to the acceptor end of tRNA(Pro). This chain is Proline--tRNA ligase, found in Erythrobacter litoralis (strain HTCC2594).